We begin with the raw amino-acid sequence, 470 residues long: Poly(A) polymerase catalytic subunit (470 aa).

Residues aspartate 192 and aspartate 194 contribute to the active site.

It belongs to the poxviridae poly(A) polymerase catalytic subunit family. Heterodimer of a large (catalytic) subunit and a small (regulatory) subunit.

The enzyme catalyses RNA(n) + ATP = RNA(n)-3'-adenine ribonucleotide + diphosphate. Polymerase that creates the 3'-poly(A) tail of mRNA's. The sequence is that of Poly(A) polymerase catalytic subunit (PAPL) from Molluscum contagiosum virus subtype 1 (MOCV).